A 358-amino-acid chain; its full sequence is Protein RecA (358 aa).

ATP is bound at residue 76–83 (GPESSGKT).

This sequence belongs to the RecA family.

Its subcellular location is the cytoplasm. In terms of biological role, can catalyze the hydrolysis of ATP in the presence of single-stranded DNA, the ATP-dependent uptake of single-stranded DNA by duplex DNA, and the ATP-dependent hybridization of homologous single-stranded DNAs. It interacts with LexA causing its activation and leading to its autocatalytic cleavage. This chain is Protein RecA, found in Rhodospirillum centenum (strain ATCC 51521 / SW).